The primary structure comprises 253 residues: Chloride intracellular channel protein 4 (253 aa).

The residue at position 2 (Ala-2) is an N-acetylalanine. The segment at 2-101 (ALSMPLNGLK…EEFLEEVLCP (100 aa)) is required for insertion into the membrane. Ser-4 is subject to Phosphoserine. Residue Lys-24 is modified to N6-acetyllysine. A G-site motif is present at residues 35 to 38 (CPFS). Residues 37-57 (FSQRLFMILWLKGVVFSVTTV) form a helical membrane-spanning segment. The region spanning 81–244 (NSEVKTDVNK…PSDKEVEIAY (164 aa)) is the GST C-terminal domain. N6-acetyllysine is present on Lys-130. Ser-132, Ser-167, and Ser-236 each carry phosphoserine. Tyr-244 bears the Phosphotyrosine mark.

The protein belongs to the chloride channel CLIC family. Component of a multimeric complex consisting of several cytoskeletal proteins, including actin, ezrin, alpha-actinin, gelsolin, IQGAP1 and CLIC5A. Binds directly to brain dynamin I in a complex containing actin, tubulin and 14-3-3 isoforms. Monomer. Interacts with HRH3. Interacts with AKAP9. In terms of tissue distribution, detected in epithelial cells from colon, esophagus and kidney (at protein level). Expression is prominent in heart, kidney, placenta and skeletal muscle.

The protein localises to the cytoplasm. It localises to the cytoskeleton. It is found in the microtubule organizing center. Its subcellular location is the centrosome. The protein resides in the cytoplasmic vesicle membrane. The protein localises to the nucleus. It localises to the cell membrane. It is found in the mitochondrion. Its subcellular location is the cell junction. The protein resides in the endoplasmic reticulum membrane. It catalyses the reaction chloride(in) = chloride(out). The enzyme catalyses thiocyanate(in) = thiocyanate(out). It carries out the reaction nitrate(in) = nitrate(out). The catalysed reaction is iodide(out) = iodide(in). It catalyses the reaction bromide(in) = bromide(out). The enzyme catalyses fluoride(in) = fluoride(out). It carries out the reaction choline(out) = choline(in). Inhibited by rapamycin, amphotericin B and IAA-94. In terms of biological role, in the soluble state, catalyzes glutaredoxin-like thiol disulfide exchange reactions with reduced glutathione as electron donor. Can insert into membranes and form voltage-dependent multi-ion conductive channels. Membrane insertion seems to be redox-regulated and may occur only under oxidizing conditions. Has alternate cellular functions like a potential role in angiogenesis or in maintaining apical-basolateral membrane polarity during mitosis and cytokinesis. Could also promote endothelial cell proliferation and regulate endothelial morphogenesis (tubulogenesis). Promotes cell-surface expression of HRH3. The sequence is that of Chloride intracellular channel protein 4 from Homo sapiens (Human).